We begin with the raw amino-acid sequence, 136 residues long: Histone H2B.5 (136 aa).

Basic and acidic residues predominate over residues 1-36 (MAPKAEKKPAAEKKPVETEKKPKAEKRVPGKDGGAD). Residues 1–44 (MAPKAEKKPAAEKKPVETEKKPKAEKRVPGKDGGADKKKKKAKK) are disordered. K7 and K26 each carry N6-acetyllysine. K132 participates in a covalent cross-link: Glycyl lysine isopeptide (Lys-Gly) (interchain with G-Cter in ubiquitin).

It belongs to the histone H2B family. As to quaternary structure, the nucleosome is a histone octamer containing two molecules each of H2A, H2B, H3 and H4 assembled in one H3-H4 heterotetramer and two H2A-H2B heterodimers. The octamer wraps approximately 147 bp of DNA. In terms of processing, can be acetylated to form H2BK6ac and H2BK33ac. Monoubiquitinated to form H2BK143ub1; may give a specific tag for epigenetic transcriptional activation.

The protein resides in the nucleus. It localises to the chromosome. Functionally, core component of nucleosome. Nucleosomes wrap and compact DNA into chromatin, limiting DNA accessibility to the cellular machineries which require DNA as a template. Histones thereby play a central role in transcription regulation, DNA repair, DNA replication and chromosomal stability. DNA accessibility is regulated via a complex set of post-translational modifications of histones, also called histone code, and nucleosome remodeling. The sequence is that of Histone H2B.5 from Triticum aestivum (Wheat).